A 386-amino-acid polypeptide reads, in one-letter code: MRDLILVGGGLANGLIAWRLRQRYPQLNLLLIEAGEQPGGNHTWSFHEDDLTPGQHAWLAPLVAHAWPGYEVQFPDLRRRLARGYYSITSERFAEALHQALGENIWLNCSVSEVLPNSVRLANGEALLAGAVIDGRGVTASSAMQTGYQLFLGQQWRLTQPHGLTVPILMDATVAQQQGYRFVYTLPLSADTLLIEDTRYANVPQRDDNALRQTVTDYAHSKGWQLAQLEREETGCLPITLAGDIQALWADAPGVPRSGMRAGLFHPTTGYSLPLAVALADAIADSPRLGSVPLYQLTRQFAERHWRRQGFFRLLNRMLFLAGREENRWRVMQRFYGLPEPTVERFYAGRLSLFDKARILTGKPPVPLGEAWRAALNHFPDRRDKG.

NAD(+) is bound at residue 3 to 33; it reads DLILVGGGLANGLIAWRLRQRYPQLNLLLIE.

It belongs to the lycopene cyclase family. FAD is required as a cofactor.

The catalysed reaction is a carotenoid psi-end group = a carotenoid beta-end derivative. The enzyme catalyses all-trans-lycopene = gamma-carotene. It carries out the reaction gamma-carotene = all-trans-beta-carotene. It functions in the pathway carotenoid biosynthesis; beta-carotene biosynthesis. Its function is as follows. Catalyzes the double cyclization reaction which converts lycopene to beta-carotene. The sequence is that of Lycopene beta-cyclase from Pseudescherichia vulneris (Escherichia vulneris).